The following is a 335-amino-acid chain: Tetraacyldisaccharide 4'-kinase (335 aa).

59 to 66 (TAGGNGKT) serves as a coordination point for ATP.

It belongs to the LpxK family.

It catalyses the reaction a lipid A disaccharide + ATP = a lipid IVA + ADP + H(+). The protein operates within glycolipid biosynthesis; lipid IV(A) biosynthesis; lipid IV(A) from (3R)-3-hydroxytetradecanoyl-[acyl-carrier-protein] and UDP-N-acetyl-alpha-D-glucosamine: step 6/6. In terms of biological role, transfers the gamma-phosphate of ATP to the 4'-position of a tetraacyldisaccharide 1-phosphate intermediate (termed DS-1-P) to form tetraacyldisaccharide 1,4'-bis-phosphate (lipid IVA). This Vibrio campbellii (strain ATCC BAA-1116) protein is Tetraacyldisaccharide 4'-kinase.